A 1139-amino-acid polypeptide reads, in one-letter code: Dual 3',5'-cyclic-AMP and -GMP phosphodiesterase beta (1139 aa).

Disordered stretches follow at residues 1 to 42 and 154 to 177; these read MGKV…NINK and GISEDNRQNQRNADNNSLNWSTSN. Over 1 to 429 the chain is Cytoplasmic; that stretch reads MGKVEDFEEH…LNLNNWISSR (429 aa). Basic and acidic residues predominate over residues 9-22; it reads EHNKNSNQDIEKNV. Residues 29-42 are compositionally biased toward polar residues; the sequence is NSNTINDQNENINK. Residues 430–450 traverse the membrane as a helical segment; sequence MIIIGIVMLILSFIIWPLTTW. Residues 451-462 are Extracellular-facing; it reads SLKTSTWGRETY. The helical transmembrane segment at 463-483 threads the bilayer; it reads IIILFHTLMAINTLILIFFII. At 484-498 the chain is on the cytoplasmic side; that stretch reads IGSTELCKYSECMSY. The chain crosses the membrane as a helical span at residues 499-519; that stretch reads VLFSLMVALWGLWNIAIGLTL. Residues 520 to 536 lie on the Extracellular side of the membrane; sequence EYNPNLSEMPTTTYELE. N-linked (GlcNAc...) asparagine glycosylation occurs at Asn-524. A helical transmembrane segment spans residues 537–557; that stretch reads MIYVLTYIYGFLPLVIIDIFF. At 558–564 the chain is on the cytoplasmic side; the sequence is PSRTKYN. Residues 565-585 traverse the membrane as a helical segment; the sequence is WIIHLIFIFLNSSSIILVGSA. Residues 586–592 lie on the Extracellular side of the membrane; it reads KPDFVPE. A helical transmembrane segment spans residues 593–613; that stretch reads IYVVFRILAYTTLCIFLYIGS. At 614–1139 the chain is on the cytoplasmic side; sequence YTSELQIRYV…TLFFIKNVSD (526 aa). The region spanning 775–1098 is the PDEase domain; sequence INISQLTKMI…IMWDTLMKEE (324 aa). His-847 acts as the Proton donor in catalysis. An a nucleoside 3',5'-cyclic phosphate-binding site is contributed by 847–851; the sequence is HNTIH. Positions 851, 887, 888, and 1000 each coordinate a divalent metal cation. The a nucleoside 3',5'-cyclic phosphate site is built by Asp-888, Asp-1000, and Gln-1052.

This sequence belongs to the cyclic nucleotide phosphodiesterase family. Requires a divalent metal cation as cofactor.

It localises to the cell membrane. Its subcellular location is the endoplasmic reticulum membrane. It catalyses the reaction 3',5'-cyclic GMP + H2O = GMP + H(+). It carries out the reaction 3',5'-cyclic AMP + H2O = AMP + H(+). The protein operates within purine metabolism; 3',5'-cyclic GMP degradation; GMP from 3',5'-cyclic GMP: step 1/1. It functions in the pathway purine metabolism; 3',5'-cyclic AMP degradation; AMP from 3',5'-cyclic AMP: step 1/1. In terms of biological role, plays a role in signal transduction by regulating the intracellular concentration of cyclic nucleotides cAMP and cGMP. Catalyzes the hydrolysis of both cAMP and cGMP to 5'-AMP and 5'-GMP, respectively. By regulating cAMP levels during the asexual blood stage and, thus PKA activation, required for merozoite invasion of erythrocytes and for the parasite development immediately following invasion. The sequence is that of Dual 3',5'-cyclic-AMP and -GMP phosphodiesterase beta from Plasmodium falciparum (isolate 3D7).